The sequence spans 171 residues: Protein hunchback (171 aa).

Disordered regions lie at residues 14–93 (PMSH…PMQI) and 124–171 (SNDK…KYMA). The span at 17 to 31 (HHHHHSHHSHGHHHS) shows a compositional bias: basic residues. Low complexity-rich tracts occupy residues 32–42 (NSNSNASSPRQ) and 52–80 (SSSN…DTPL). The span at 152–171 (EPEKDHDLMSNSSEDMKYMA) shows a compositional bias: basic and acidic residues.

It belongs to the hunchback C2H2-type zinc-finger protein family.

Its subcellular location is the nucleus. Functionally, gap class segmentation protein that controls development of head structures. The protein is Protein hunchback (hb) of Scaptomyza albovittata (Fruit fly).